A 203-amino-acid chain; its full sequence is uncharacterized protein (203 aa).

Residues 9–29 (LVVLFTIVTFGLVSPPAALMA) traverse the membrane as a helical segment.

The protein resides in the membrane. This is an uncharacterized protein from Bacillus subtilis (strain 168).